Consider the following 486-residue polypeptide: UDP-N-acetylmuramoyl-L-alanyl-D-glutamate--2,6-diaminopimelate ligase (486 aa).

A UDP-N-acetyl-alpha-D-muramoyl-L-alanyl-D-glutamate-binding site is contributed by S33. 110 to 116 (GTNGKTS) contributes to the ATP binding site. UDP-N-acetyl-alpha-D-muramoyl-L-alanyl-D-glutamate is bound by residues 152 to 153 (TT), S179, Q185, and R187. K219 bears the N6-carboxylysine mark. Meso-2,6-diaminopimelate-binding positions include R383, 407 to 410 (DNPR), G455, and E459. The Meso-diaminopimelate recognition motif motif lies at 407-410 (DNPR).

Belongs to the MurCDEF family. MurE subfamily. The cofactor is Mg(2+). In terms of processing, carboxylation is probably crucial for Mg(2+) binding and, consequently, for the gamma-phosphate positioning of ATP.

Its subcellular location is the cytoplasm. It catalyses the reaction UDP-N-acetyl-alpha-D-muramoyl-L-alanyl-D-glutamate + meso-2,6-diaminopimelate + ATP = UDP-N-acetyl-alpha-D-muramoyl-L-alanyl-gamma-D-glutamyl-meso-2,6-diaminopimelate + ADP + phosphate + H(+). Its pathway is cell wall biogenesis; peptidoglycan biosynthesis. In terms of biological role, catalyzes the addition of meso-diaminopimelic acid to the nucleotide precursor UDP-N-acetylmuramoyl-L-alanyl-D-glutamate (UMAG) in the biosynthesis of bacterial cell-wall peptidoglycan. The protein is UDP-N-acetylmuramoyl-L-alanyl-D-glutamate--2,6-diaminopimelate ligase of Zymomonas mobilis subsp. mobilis (strain ATCC 31821 / ZM4 / CP4).